The following is a 910-amino-acid chain: Protein translocase subunit SecA (910 aa).

Residues glutamine 89, glycine 107 to threonine 111, and aspartate 496 each bind ATP. A disordered region spans residues glutamine 873–arginine 910. Polar residues predominate over residues serine 876 to asparagine 886.

The protein belongs to the SecA family. In terms of assembly, monomer and homodimer. Part of the essential Sec protein translocation apparatus which comprises SecA, SecYEG and auxiliary proteins SecDF. Other proteins may also be involved.

The protein localises to the cell inner membrane. It localises to the cytoplasm. The catalysed reaction is ATP + H2O + cellular proteinSide 1 = ADP + phosphate + cellular proteinSide 2.. Its function is as follows. Part of the Sec protein translocase complex. Interacts with the SecYEG preprotein conducting channel. Has a central role in coupling the hydrolysis of ATP to the transfer of proteins into and across the cell membrane, serving as an ATP-driven molecular motor driving the stepwise translocation of polypeptide chains across the membrane. The sequence is that of Protein translocase subunit SecA from Leptospira interrogans serogroup Icterohaemorrhagiae serovar copenhageni (strain Fiocruz L1-130).